A 123-amino-acid chain; its full sequence is UPF0382 membrane protein YwdK (123 aa).

The next 4 membrane-spanning stretches (helical) occupy residues 3–23 (VFIILGAINALLAVGLGAFGA), 49–69 (ALGLFVVAFLADKLSGIGSVT), 71–91 (AGWLMFAGIVLFSGSLYILSV), and 96–116 (ILGAITPLGGVAFIISWIMIV).

It belongs to the UPF0382 family.

The protein resides in the cell membrane. This Bacillus subtilis (strain 168) protein is UPF0382 membrane protein YwdK (ywdK).